Consider the following 514-residue polypeptide: GMP synthase [glutamine-hydrolyzing] (514 aa).

The Glutamine amidotransferase type-1 domain maps to 9–199 (MILVLDFGGQ…LFEVCQCTGD (191 aa)). Cys-86 (nucleophile) is an active-site residue. Active-site residues include His-173 and Glu-175. The region spanning 200 to 389 (WSMENFIEIE…LGLSDEIVWR (190 aa)) is the GMPS ATP-PPase domain. 227–233 (SGGVDSS) lines the ATP pocket.

As to quaternary structure, homodimer.

The catalysed reaction is XMP + L-glutamine + ATP + H2O = GMP + L-glutamate + AMP + diphosphate + 2 H(+). It functions in the pathway purine metabolism; GMP biosynthesis; GMP from XMP (L-Gln route): step 1/1. Catalyzes the synthesis of GMP from XMP. This chain is GMP synthase [glutamine-hydrolyzing], found in Exiguobacterium sibiricum (strain DSM 17290 / CCUG 55495 / CIP 109462 / JCM 13490 / 255-15).